Here is a 1366-residue protein sequence, read N- to C-terminus: Collagen alpha-2(I) chain (1366 aa).

The signal sequence occupies residues 1–22; the sequence is MLSFVDTRTLLLLAVTLCLATC. A Pyrrolidone carboxylic acid modification is found at Gln-23. Positions 23 to 79 are cleaved as a propeptide — N-terminal propeptide; the sequence is QSLQEETVRKGPAGDRGPRGERGPPGPPGRDGEDGPTGPPGPPGPPGPPGLGGNFAA. Positions 28 to 44 are enriched in basic and acidic residues; it reads ETVRKGPAGDRGPRGER. A disordered region spans residues 28–1130; that stretch reads ETVRKGPAGD…QPRSAPSLRP (1103 aa). Pro-47, Pro-50, Pro-62, Pro-65, Pro-68, and Pro-71 each carry 4-hydroxyproline. The span at 59-71 shows a compositional bias: pro residues; it reads TGPPGPPGPPGPP. At Gln-80 the chain carries Pyrrolidone carboxylic acid. Lys-84 carries the post-translational modification Allysine. Residues 84-94 are compositionally biased toward gly residues; sequence KGVGLGPGPMG. Over residues 95 to 140 the composition is skewed to low complexity; it reads LMGPRGPPGAAGAPGPQGFQGPAGEPGEPGQTGPAGARGPAGPPGK. Pro-102 and Pro-108 each carry 4-hydroxyproline. Positions 141–155 are enriched in basic and acidic residues; that stretch reads AGEDGHPGKPGRPGE. Lys-177 is subject to 5-hydroxylysine; alternate. Lys-177 carries an O-linked (Gal...) hydroxylysine; alternate glycan. Low complexity-rich tracts occupy residues 225–254, 269–293, 300–321, 330–345, 398–410, and 419–434; these read VGAPGPAGARGSDGSVGPVGPAGPIGSAGP, AVGNAGPAGPAGPRGEVGLPGLSGP, PGANGLTGAKGAAGLPGVAGAP, PGPVGAAGATGARGLV, LRGSPGSRGLPGA, and PPGSRGASGPAGVRGP. 4-hydroxyproline is present on residues Pro-420, Pro-441, and Pro-444. Composition is skewed to low complexity over residues 470–489 and 513–531; these read LPGIDGRPGPIGPAGARGEP and AGLAGARGAPGPDGNNGAQ. Residues 538 to 547 are compositionally biased toward gly residues; the sequence is GVQGGKGEQG. Low complexity-rich tracts occupy residues 594–611, 623–648, 663–710, and 717–737; these read PGESGAAGPTGPIGSRGP, EPGVVGAVGTAGPSGPSGLPGERGAA, RGEI…PRGS, and VGPAGPNGFAGPAGAAGQPGA. Residues 738 to 747 show a composition bias toward basic and acidic residues; it reads KGERGAKGPK. Low complexity predominate over residues 752-765; that stretch reads VVGPTGPVGAAGPA. Residues 775 to 784 show a composition bias toward gly residues; it reads GSRGDGGPPG. Low complexity-rich tracts occupy residues 786-795, 849-876, 884-932, 956-974, and 983-1001; these read TGFPGAAGRT, SGEAGTAGPPGTPGPQGLLGAPGILGLP, LPGV…NPGN, PVGAAGAPGPHGPVGPAGK, and PSGPVGPAGAVGPRGPSGP. The segment covering 1005–1016 has biased composition (basic and acidic residues); sequence RGDKGEPGEKGP. The segment covering 1089–1101 has biased composition (pro residues); sequence AGPPGPPGPPGPP. Positions 1120–1366 are cleaved as a propeptide — C-terminal propeptide; sequence DQPRSAPSLR…FVDIGPVCFK (247 aa). Residues 1133-1366 form the Fibrillar collagen NC1 domain; it reads YEVDATLKSL…FVDIGPVCFK (234 aa). Intrachain disulfides connect Cys-1163/Cys-1195, Cys-1203/Cys-1364, and Cys-1272/Cys-1317. 5 residues coordinate Ca(2+): Asp-1181, Asn-1183, Gln-1184, Cys-1186, and Asp-1189. Asn-1267 carries an N-linked (GlcNAc...) asparagine glycan.

It belongs to the fibrillar collagen family. As to quaternary structure, trimers of one alpha 2(I) and two alpha 1(I) chains. Interacts (via C-terminus) with TMEM131 (via PapD-L domain); the interaction is direct and is involved in assembly and TRAPPIII ER-to-Golgi transport complex-dependent secretion of collagen. Post-translationally, prolines at the third position of the tripeptide repeating unit (G-X-Y) are hydroxylated in some or all of the chains. Forms the fibrils of tendon, ligaments and bones. In bones the fibrils are mineralized with calcium hydroxyapatite.

The protein localises to the secreted. The protein resides in the extracellular space. It is found in the extracellular matrix. Functionally, type I collagen is a member of group I collagen (fibrillar forming collagen). The chain is Collagen alpha-2(I) chain (COL1A2) from Homo sapiens (Human).